Here is a 169-residue protein sequence, read N- to C-terminus: Nucleoside diphosphate kinase 3 (169 aa).

ADP contacts are provided by Lys-29, Arg-105, Thr-111, Arg-122, Val-129, and Asn-132. Residue His-135 is the Pros-phosphohistidine intermediate of the active site.

The protein belongs to the NDK family. In terms of assembly, homohexamer. Interacts (via its N-terminal region) with KAT5; this interaction enables recruitment of NME3 at DNA damage sites where it plays a role in the repair of DNA. Found in association with several ciliary nephronophthisis proteins, including NEK8, CEP164, ANKS6. The cofactor is Mg(2+).

Its subcellular location is the mitochondrion outer membrane. The protein resides in the cytoplasm. It is found in the cytoskeleton. The protein localises to the cilium basal body. The enzyme catalyses a 2'-deoxyribonucleoside 5'-diphosphate + ATP = a 2'-deoxyribonucleoside 5'-triphosphate + ADP. The catalysed reaction is a ribonucleoside 5'-diphosphate + ATP = a ribonucleoside 5'-triphosphate + ADP. In terms of biological role, catalyzes the phosphorylation of ribonucleosides and deoxyribonucleoside diphosphates, other than ATP, into the corresponding triphosphates with ATP as the major phosphate donor. The ATP gamma phosphate is transferred to the nucleoside diphosphate beta phosphate via a ping-pong mechanism, using a phosphorylated active-site intermediate. Through the catalyzed exchange of gamma-phosphate between di- and triphosphonucleosides participates in regulation of intracellular nucleotide homeostasis. Inhibits granulocyte differentiation. May be required for ciliary function during renal development. Independently of its kinase activity, facilitates mitochondrial tethering prior to membrane fusion through its direct membrane-binding and hexamerization. Implicated in repair of both single- and double-stranded breaks in DNA through its association with the ribonucleotide reductase complex (RNR complex) via its interaction with the histone acetyltransferase KAT5, this interaction enables recruitment of NME3 at DNA damage sites where it plays a role in the repair of DNA, independently of its kinase activity. This is Nucleoside diphosphate kinase 3 (Nme3) from Mus musculus (Mouse).